Consider the following 446-residue polypeptide: uncharacterized protein (446 aa).

12 consecutive transmembrane segments (helical) span residues 20–40 (LIGVGCTIGTGFFLGSSIAIV), 42–62 (SGFSVLLSFLIAGIGTYFVFE), 95–115 (WVYWTSEMLITGSQLTAISLF), 127–147 (VFASIYAVLGLLIIFTGLSVF), 160–180 (AAIFMFIVIAILALCGILSGG), 205–225 (LIYAFYAFGGIEVMGLMAVHL), 237–257 (LMLATLAIIYIISIGLALLLV), 284–304 (IFNGIFIIAGFSTLVASLFAV), 331–351 (WPALGLTFAGLVLSIILSLVL), 355–375 (IYEHMTTAAGLMLLYTWLFIL), 388–408 (GKTQIYLAMVLIAAAVSGTLF), and 414–434 (PGFFVSIGFLVIIAIVTMIYQ).

Belongs to the amino acid-polyamine-organocation (APC) superfamily.

The protein resides in the cell membrane. This is an uncharacterized protein from Bacillus subtilis (strain 168).